The following is a 645-amino-acid chain: Rho GTPase-activating protein 25 (645 aa).

The 106-residue stretch at 46 to 151 (RPIKMGWLKK…WVKFLRRVAG (106 aa)) folds into the PH domain. The region spanning 159 to 353 (QRLDETVAYE…MMIRDHEVLF (195 aa)) is the Rho-GAP domain. Disordered regions lie at residues 355 to 444 (KSKD…QTLP) and 469 to 550 (FWSP…EEEI). 2 positions are modified to phosphoserine: Ser362 and Ser395. Residues 393–409 (TDSFSSMTSDSDTTSPT) show a composition bias toward low complexity. At Thr406 the chain carries Phosphothreonine. The segment covering 420 to 431 (DSSKVPREKPGD) has biased composition (basic and acidic residues). Residues 487–504 (SQDLRQLSDSQRTSTYDN) are compositionally biased toward polar residues. Ser536 is subject to Phosphoserine. Residues 541–644 (GKKNSGEEEI…VKSMKEPKTE (104 aa)) are a coiled coil.

In terms of biological role, GTPase activator for the Rho-type GTPases by converting them to an inactive GDP-bound state. The protein is Rho GTPase-activating protein 25 (ARHGAP25) of Homo sapiens (Human).